We begin with the raw amino-acid sequence, 574 residues long: Eukaryotic translation initiation factor 3 subunit D (574 aa).

Residues 153-178 (QRRGGNARQGQRGQGGRFGGDRPKER) form a disordered region. A compositionally biased stretch (low complexity) spans 154–163 (RRGGNARQGQ). The tract at residues 312-326 (PVETLTVSETSAEPP) is RNA gate. The interval 555–574 (EGTFDSERESSEEENSDDDQ) is disordered. Over residues 564–574 (SSEEENSDDDQ) the composition is skewed to acidic residues.

This sequence belongs to the eIF-3 subunit D family. As to quaternary structure, component of the eukaryotic translation initiation factor 3 (eIF-3) complex.

It localises to the cytoplasm. In terms of biological role, mRNA cap-binding component of the eukaryotic translation initiation factor 3 (eIF-3) complex, which is involved in protein synthesis of a specialized repertoire of mRNAs and, together with other initiation factors, stimulates binding of mRNA and methionyl-tRNAi to the 40S ribosome. The eIF-3 complex specifically targets and initiates translation of a subset of mRNAs involved in cell proliferation. In the eIF-3 complex, eif3d specifically recognizes and binds the 7-methylguanosine cap of a subset of mRNAs. The polypeptide is Eukaryotic translation initiation factor 3 subunit D (Caenorhabditis briggsae).